The sequence spans 309 residues: Protein FdhE homolog (309 aa).

It belongs to the FdhE family.

It localises to the cytoplasm. Necessary for formate dehydrogenase activity. This Pasteurella multocida (strain Pm70) protein is Protein FdhE homolog.